The sequence spans 622 residues: Probable E3 ubiquitin-protein ligase DTX2 (622 aa).

WWE domains are found at residues 8–97 and 98–174; these read SLVQ…AVRR and HLFP…SVRR. An asymmetric dimethylarginine mark is found at R213, R215, and R233. At K249 the chain carries N6-acetyllysine. 2 disordered regions span residues 249–324 and 355–393; these read KPSL…VPMQ and APQP…EPEP. The residue at position 256 (R256) is an Omega-N-methylarginine. Residues 274 to 285 are compositionally biased toward polar residues; sequence LGSQPLYRSSLS. Positions 299–322 are enriched in low complexity; it reads SGAVSASLPSGPSSSPGSVPATVP. The residue at position 360 (S360) is a Phosphoserine. The span at 372–381 shows a compositional bias: basic residues; it reads GSVKRLRKMS. The RING-type zinc finger occupies 412-473; it reads CIICMEKLST…DGSLQCPSCK (62 aa).

It belongs to the Deltex family. Homodimer. May form a heterodimer with other members of the Deltex family. Interacts with NOTCH1.

The protein resides in the cytoplasm. It localises to the nucleus. It carries out the reaction S-ubiquitinyl-[E2 ubiquitin-conjugating enzyme]-L-cysteine + [acceptor protein]-L-lysine = [E2 ubiquitin-conjugating enzyme]-L-cysteine + N(6)-ubiquitinyl-[acceptor protein]-L-lysine.. It functions in the pathway protein modification; protein ubiquitination. Functionally, regulator of Notch signaling, a signaling pathway involved in cell-cell communications that regulates a broad spectrum of cell-fate determinations. Probably acts both as a positive and negative regulator of Notch, depending on the developmental and cell context. Mediates the antineural activity of Notch, possibly by inhibiting the transcriptional activation mediated by MATCH1. Functions as a ubiquitin ligase protein in vitro, suggesting that it may regulate the Notch pathway via some ubiquitin ligase activity. This is Probable E3 ubiquitin-protein ligase DTX2 (DTX2) from Homo sapiens (Human).